The primary structure comprises 134 residues: Small ribosomal subunit protein uS8c (134 aa).

Belongs to the universal ribosomal protein uS8 family. Part of the 30S ribosomal subunit.

The protein resides in the plastid. It localises to the chloroplast. One of the primary rRNA binding proteins, it binds directly to 16S rRNA central domain where it helps coordinate assembly of the platform of the 30S subunit. The chain is Small ribosomal subunit protein uS8c (rps8) from Lactuca sativa (Garden lettuce).